We begin with the raw amino-acid sequence, 145 residues long: MDMNFDLYMNGVVEQARNEIESAGYEQLTTAEDVDKVLKQDGTTLVMINSVCGCAGGIARPAASHALHYDVLPDRLVTVFAGQDKEATQRAREYFEGYAPSSPSFALVKDGNITEMIERHQIEGHDVMNVINQLQTLFNKYCEER.

It belongs to the bacilliredoxin family.

The polypeptide is Bacilliredoxin SAR1592 (Staphylococcus aureus (strain MRSA252)).